The primary structure comprises 156 residues: Large ribosomal subunit protein uL15 (156 aa).

The tract at residues 29–48 (CGKGKTSGRGHKGQKARSGV) is disordered. A compositionally biased stretch (basic residues) spans 34 to 43 (TSGRGHKGQK).

This sequence belongs to the universal ribosomal protein uL15 family. As to quaternary structure, part of the 50S ribosomal subunit.

In terms of biological role, binds to the 23S rRNA. This chain is Large ribosomal subunit protein uL15, found in Ehrlichia chaffeensis (strain ATCC CRL-10679 / Arkansas).